The following is a 238-amino-acid chain: NADH-quinone oxidoreductase subunit I (238 aa).

4Fe-4S ferredoxin-type domains are found at residues 81–111 (LVPREDGRARCVACYMCATACPAQCIYIEAG) and 123–152 (VKFVIDELRCIVCGFCVEACPKDAIRMDSG). Residues C91, C94, C97, C101, C132, C135, C138, and C142 each coordinate [4Fe-4S] cluster.

It belongs to the complex I 23 kDa subunit family. NDH-1 is composed of 14 different subunits. Subunits NuoA, H, J, K, L, M, N constitute the membrane sector of the complex. Requires [4Fe-4S] cluster as cofactor.

Its subcellular location is the cell inner membrane. The catalysed reaction is a quinone + NADH + 5 H(+)(in) = a quinol + NAD(+) + 4 H(+)(out). Its function is as follows. NDH-1 shuttles electrons from NADH, via FMN and iron-sulfur (Fe-S) centers, to quinones in the respiratory chain. The immediate electron acceptor for the enzyme in this species is believed to be ubiquinone. Couples the redox reaction to proton translocation (for every two electrons transferred, four hydrogen ions are translocated across the cytoplasmic membrane), and thus conserves the redox energy in a proton gradient. The sequence is that of NADH-quinone oxidoreductase subunit I from Anaeromyxobacter sp. (strain Fw109-5).